Here is a 209-residue protein sequence, read N- to C-terminus: Large ribosomal subunit protein uL3 (209 aa).

Gln-150 carries the N5-methylglutamine modification.

The protein belongs to the universal ribosomal protein uL3 family. In terms of assembly, part of the 50S ribosomal subunit. Forms a cluster with proteins L14 and L19. Post-translationally, methylated by PrmB.

Functionally, one of the primary rRNA binding proteins, it binds directly near the 3'-end of the 23S rRNA, where it nucleates assembly of the 50S subunit. In Vibrio vulnificus (strain YJ016), this protein is Large ribosomal subunit protein uL3.